Here is a 132-residue protein sequence, read N- to C-terminus: MNRVLCAPAAGAVRALRLIGWASRSLHPLPGSRDRAHPAAEEEDDPDRPIEFSSSKANPHRWSVGHTMGKGHQRPWWKVLPLSCFLVALIIWCYLREESEADQWLRQVWGEVPEPSDRSEEPETPAAYRART.

The N-terminal stretch at 1 to 15 (MNRVLCAPAAGAVRA) is a signal peptide. The Mitochondrial matrix segment spans residues 16 to 78 (LRLIGWASRS…GKGHQRPWWK (63 aa)). The disordered stretch occupies residues 29–72 (LPGSRDRAHPAAEEEDDPDRPIEFSSSKANPHRWSVGHTMGKGH). A helical transmembrane segment spans residues 79–95 (VLPLSCFLVALIIWCYL). Residues 96–132 (REESEADQWLRQVWGEVPEPSDRSEEPETPAAYRART) are Mitochondrial intermembrane-facing. The disordered stretch occupies residues 110 to 132 (GEVPEPSDRSEEPETPAAYRART).

This sequence belongs to the UQCC4 family. In terms of assembly, forms a complex, named COMB/coordinator of mitochondrial CYTB biogenesis, composed of UQCC1, UQCC2, UQCC4, UQCC5 and UQCC6; stabilizes nascent cytochrome b/MT-CYB and promotes its membrane insertion. Forms a complex, named COMA, composed of UQCC1, UQCC2 and UQCC4; activates MT-CYB translation. Forms a complex, named COMC, composed of UQCC1, UQCC2; UQCC3 and UQCC4; mediates MT-CYB hemylation and association with the first nuclear-encoded complex III subunit UQCRQ. Complexes COMA and COMB are bound to the mitochondrion inner membrane by UQCC4.

Its subcellular location is the mitochondrion inner membrane. Its function is as follows. Required for the assembly and stability of the mitochondrial ubiquinol-cytochrome c reductase complex (complex III (CIII) or cytochrome b-c1 complex), a multisubunit transmembrane complex that is part of the mitochondrial electron transport chain (ETC) which drives oxidative phosphorylation. This chain is Ubiquinol-cytochrome c reductase complex assembly factor 4, found in Homo sapiens (Human).